Consider the following 521-residue polypeptide: Two-component response regulator ARR11 (521 aa).

The Response regulatory domain occupies 12 to 127; it reads RVLVVDDDPT…ELKIIWQHVL (116 aa). Asp-63 is modified (4-aspartylphosphate). The Nuclear localization signal signature appears at 192–195; it reads KKAR. The myb-like GARP DNA-binding region spans 195-246; sequence RVVWSFELHHKFVNAVNQIGCDHKAGPKKILDLMNVPWLTRENVASHLQKYR.

The protein belongs to the ARR family. Type-B subfamily. As to quaternary structure, binds the target DNA as a monomer. Post-translationally, two-component system major event consists of a His-to-Asp phosphorelay between a sensor histidine kinase (HK) and a response regulator (RR). In plants, the His-to-Asp phosphorelay involves an additional intermediate named Histidine-containing phosphotransfer protein (HPt). This multistep phosphorelay consists of a His-Asp-His-Asp sequential transfer of a phosphate group between first a His and an Asp of the HK protein, followed by the transfer to a conserved His of the HPt protein and finally the transfer to an Asp in the receiver domain of the RR protein. In terms of tissue distribution, detected in the whole plant. Predominantly expressed in roots and stems.

It is found in the nucleus. In terms of biological role, transcriptional activator that binds specifically to the DNA sequence 5'-[AG]GATT-3'. Functions as a response regulator involved in His-to-Asp phosphorelay signal transduction system. Phosphorylation of the Asp residue in the receiver domain activates the ability of the protein to promote the transcription of target genes. Could directly activate some type-A response regulators in response to cytokinins. The sequence is that of Two-component response regulator ARR11 (ARR11) from Arabidopsis thaliana (Mouse-ear cress).